The following is a 63-amino-acid chain: Metallothionein-2 (63 aa).

The protein belongs to the metallothionein superfamily. Type 6 family.

This protein binds cations of several transition elements. The chain is Metallothionein-2 (mtl-2) from Caenorhabditis elegans.